Consider the following 137-residue polypeptide: Small ribosomal subunit protein uS12 (137 aa).

The tract at residues 1-28 (MPTINQLVRKPRKSKAKKSDSPALNKGF) is disordered. The residue at position 102 (Asp102) is a 3-methylthioaspartic acid.

This sequence belongs to the universal ribosomal protein uS12 family. As to quaternary structure, part of the 30S ribosomal subunit. Contacts proteins S8 and S17. May interact with IF1 in the 30S initiation complex.

Functionally, with S4 and S5 plays an important role in translational accuracy. Its function is as follows. Interacts with and stabilizes bases of the 16S rRNA that are involved in tRNA selection in the A site and with the mRNA backbone. Located at the interface of the 30S and 50S subunits, it traverses the body of the 30S subunit contacting proteins on the other side and probably holding the rRNA structure together. The combined cluster of proteins S8, S12 and S17 appears to hold together the shoulder and platform of the 30S subunit. This is Small ribosomal subunit protein uS12 from Staphylococcus carnosus (strain TM300).